A 291-amino-acid chain; its full sequence is Cytochrome c-552 (291 aa).

The signal sequence occupies residues 1–23; that stretch reads MKKTLMASAVGAVIAFGTHGAMA. Residues Cys68, Cys71, His72, Cys157, Cys161, and His162 each coordinate heme c.

Post-translationally, binds 2 heme c groups per subunit.

It localises to the periplasm. Functionally, may play a role in nitrite reduction. Shows peroxidase activity on proteolytic modification. The sequence is that of Cytochrome c-552 (nirB) from Stutzerimonas stutzeri (Pseudomonas stutzeri).